The primary structure comprises 238 residues: Small ribosomal subunit protein uS2c (238 aa).

This sequence belongs to the universal ribosomal protein uS2 family.

The protein resides in the plastid. The protein localises to the chloroplast. The protein is Small ribosomal subunit protein uS2c (rps2) of Oltmannsiellopsis viridis (Marine flagellate).